A 165-amino-acid chain; its full sequence is UPF0303 protein Bphyt_1734 (165 aa).

It belongs to the UPF0303 family.

In Paraburkholderia phytofirmans (strain DSM 17436 / LMG 22146 / PsJN) (Burkholderia phytofirmans), this protein is UPF0303 protein Bphyt_1734.